Consider the following 392-residue polypeptide: Speckle-type POZ protein-like (392 aa).

An MATH domain is found at 31 to 161 (KFSYMWTINN…DDKLTLFCEV (131 aa)). Positions 200-267 (TDCSFFVRGQ…IYTGRAPNLD (68 aa)) constitute a BTB domain.

It belongs to the Tdpoz family. Homodimer. Heterodimer with SPOP. Component of cullin-RING-based BCR (BTB-CUL3-RBX1) E3 ubiquitin-protein ligase complexes containing homodimeric SPOPL or the heterodimer formed by SPOP and SPOPL. Interacts with CUL3 and MACROH2A1.

Its subcellular location is the nucleus. The protein operates within protein modification; protein ubiquitination. Functionally, component of a cullin-RING-based BCR (BTB-CUL3-RBX1) E3 ubiquitin-protein ligase complex that mediates the ubiquitination and subsequent proteasomal degradation of target proteins, but with relatively low efficiency. Cullin-RING-based BCR (BTB-CUL3-RBX1) E3 ubiquitin-protein ligase complexes containing homodimeric SPOPL or the heterodimer formed by SPOP and SPOPL are less efficient than ubiquitin ligase complexes containing only SPOP. May function to down-regulate the activity of cullin-RING-based BCR (BTB-CUL3-RBX1) E3 ubiquitin-protein ligase complexes that contain SPOP. This chain is Speckle-type POZ protein-like (SPOPL), found in Homo sapiens (Human).